We begin with the raw amino-acid sequence, 72 residues long: Translation initiation factor IF-1 (72 aa).

In terms of domain architecture, S1-like spans 2–72; that stretch reads AKDDVIEVEG…TRGRITYRYK (71 aa). Position 60 is a phosphotyrosine (tyrosine 60).

The protein belongs to the IF-1 family. As to quaternary structure, component of the 30S ribosomal translation pre-initiation complex which assembles on the 30S ribosome in the order IF-2 and IF-3, IF-1 and N-formylmethionyl-tRNA(fMet); mRNA recruitment can occur at any time during PIC assembly.

The protein localises to the cytoplasm. Its function is as follows. One of the essential components for the initiation of protein synthesis. Stabilizes the binding of IF-2 and IF-3 on the 30S subunit to which N-formylmethionyl-tRNA(fMet) subsequently binds. Helps modulate mRNA selection, yielding the 30S pre-initiation complex (PIC). Upon addition of the 50S ribosomal subunit IF-1, IF-2 and IF-3 are released leaving the mature 70S translation initiation complex. The protein is Translation initiation factor IF-1 of Bacillus subtilis (strain 168).